The following is a 535-amino-acid chain: MGMEVAAARLGALYTTSDYASVVSINLFVALLCACIVLGHLLEENRWVNESITALIIGLCTGVVILLMTKGKSSHLFVFSEDLFFIYLLPPIIFNAGFQVKKKQFFRNFMTITLFGAVGTMISFFTISIAAIAIFSRMNIGTLDVGDFLAIGAIFSATDSVCTLQVLNQDETPFLYSLVFGEGVVNDATSIVLFNALQNFDLVHIDAAVVLKFLGNFFYLFLSSTFLGVFAGLLSAYIIKKLYIGRHSTDREVALMMLMAYLSYMLAELLDLSGILTVFFCGIVMSHYTWHNVTESSRVTTKHAFATLSFIAETFLFLYVGMDALDIEKWEFASDRPGKSIGISSILLGLVLIGRAAFVFPLSFLSNLTKKAPNEKITWRQQVVIWWAGLMRGAVSIALAYNKFTRSGHTQLHGNAIMITSTITVVLFSTMVFGMMTKPLIRLLLPASGHPVTSEPSSPKSLHSPLLTSMQGSDLESTTNIVRPSSLRMLLTKPTHTVHYYWRKFDDALMRPMFGGRGFVPFSPGSPTEQSHGGR.

Residues 1–21 lie on the Cytoplasmic side of the membrane; it reads MGMEVAAARLGALYTTSDYAS. The chain crosses the membrane as a helical span at residues 22 to 42; it reads VVSINLFVALLCACIVLGHLL. Topologically, residues 43 to 46 are vacuolar; it reads EENR. The chain crosses the membrane as a helical span at residues 47 to 67; it reads WVNESITALIIGLCTGVVILL. Residues 68–75 lie on the Cytoplasmic side of the membrane; it reads MTKGKSSH. Residues 76–96 form a helical membrane-spanning segment; sequence LFVFSEDLFFIYLLPPIIFNA. Topologically, residues 97-114 are vacuolar; the sequence is GFQVKKKQFFRNFMTITL. A helical membrane pass occupies residues 115 to 135; it reads FGAVGTMISFFTISIAAIAIF. The Cytoplasmic portion of the chain corresponds to 136 to 137; sequence SR. The helical transmembrane segment at 138–158 threads the bilayer; sequence MNIGTLDVGDFLAIGAIFSAT. Residues 159 to 173 lie on the Vacuolar side of the membrane; the sequence is DSVCTLQVLNQDETP. Residues 174-194 form a helical membrane-spanning segment; the sequence is FLYSLVFGEGVVNDATSIVLF. The Cytoplasmic portion of the chain corresponds to 195 to 218; the sequence is NALQNFDLVHIDAAVVLKFLGNFF. A helical membrane pass occupies residues 219–239; the sequence is YLFLSSTFLGVFAGLLSAYII. The Vacuolar segment spans residues 240–264; sequence KKLYIGRHSTDREVALMMLMAYLSY. Residues 265–285 form a helical membrane-spanning segment; sequence MLAELLDLSGILTVFFCGIVM. At 286 to 304 the chain is on the cytoplasmic side; it reads SHYTWHNVTESSRVTTKHA. A helical membrane pass occupies residues 305–325; the sequence is FATLSFIAETFLFLYVGMDAL. At 326–344 the chain is on the vacuolar side; the sequence is DIEKWEFASDRPGKSIGIS. Residues 345–365 traverse the membrane as a helical segment; the sequence is SILLGLVLIGRAAFVFPLSFL. Topologically, residues 366-381 are cytoplasmic; the sequence is SNLTKKAPNEKITWRQ. Residues 382-402 traverse the membrane as a helical segment; the sequence is QVVIWWAGLMRGAVSIALAYN. The Vacuolar portion of the chain corresponds to 403–415; the sequence is KFTRSGHTQLHGN. A helical transmembrane segment spans residues 416 to 436; sequence AIMITSTITVVLFSTMVFGMM. Residues 437–535 lie on the Cytoplasmic side of the membrane; that stretch reads TKPLIRLLLP…SPTEQSHGGR (99 aa). The interval 452–478 is disordered; sequence VTSEPSSPKSLHSPLLTSMQGSDLEST. The span at 454 to 469 shows a compositional bias: low complexity; it reads SEPSSPKSLHSPLLTS.

Belongs to the monovalent cation:proton antiporter 1 (CPA1) transporter (TC 2.A.36) family.

The protein resides in the vacuole membrane. It carries out the reaction Na(+)(in) + H(+)(out) = Na(+)(out) + H(+)(in). The enzyme catalyses K(+)(in) + H(+)(out) = K(+)(out) + H(+)(in). Vacuolar antiporter that acts in low affinity electroneutral exchange of protons H(+) for cations such as Na(+) or K(+) across membranes. Plays important roles in the transport of Na(+) and K(+) accumulated in the cytoplasm into vacuoles, and is involved in salt stress tolerance. The protein is Sodium/hydrogen exchanger 1 of Oryza sativa subsp. japonica (Rice).